A 177-amino-acid chain; its full sequence is Putative zinc finger protein 826 (177 aa).

A C2H2-type 1; degenerate zinc finger spans residues 99 to 114; sequence KTFTWSSSPHKHRRTH. The C2H2-type 2; degenerate zinc-finger motif lies at 120-142; sequence YKCEECGKAFTASSTLSEYKTIH. The C2H2-type 3 zinc-finger motif lies at 148–170; that stretch reads CKCEECGKAFNWSSDFNKHKRIH.

The protein resides in the nucleus. Its function is as follows. May be involved in transcriptional regulation. The sequence is that of Putative zinc finger protein 826 (ZNF826P) from Homo sapiens (Human).